Reading from the N-terminus, the 198-residue chain is Recombination protein RecR (198 aa).

The C4-type zinc-finger motif lies at 57–72 (CSVCGHITEEDPCYIC). Positions 80-175 (SVICVVEDDK…KVTRLAQGLS (96 aa)) constitute a Toprim domain.

It belongs to the RecR family.

Functionally, may play a role in DNA repair. It seems to be involved in an RecBC-independent recombinational process of DNA repair. It may act with RecF and RecO. This chain is Recombination protein RecR, found in Staphylococcus carnosus (strain TM300).